We begin with the raw amino-acid sequence, 188 residues long: Transmembrane protein 160 (188 aa).

A mitochondrion-targeting transit peptide spans 1–96 (MGGGWWWARA…ISFMQSDMGR (96 aa)). The tract at residues 24 to 52 (PPQRPRSGGARGSFAPGHGPRAGASPPPV) is disordered. Ser48 carries the post-translational modification Phosphoserine. 2 helical membrane-spanning segments follow: residues 102–122 (FFLLGGLCVVWGSASYAVGLA) and 135–155 (AAVGAGAVLAASLLWACAVGL). Residues 168 to 188 (PEDDGTASAEGPDEAGRPPPE) form a disordered region.

Belongs to the TMEM160 family.

The protein resides in the mitochondrion inner membrane. The chain is Transmembrane protein 160 from Homo sapiens (Human).